The sequence spans 209 residues: Methylated-DNA--protein-cysteine methyltransferase (209 aa).

Residue Cys-5 coordinates Zn(2+). Ser-14 carries the phosphoserine modification. Zn(2+) is bound by residues Cys-24 and His-29. Residues 35-57 (SGKTPSSDPKEAPASPELLGGPE) are disordered. His-89 provides a ligand contact to Zn(2+). The DNA site is built by Thr-99, Tyr-118, Gln-119, Asn-127, and Arg-132. Cys-149 acts as the Nucleophile; methyl group acceptor in catalysis. Ser-155 provides a ligand contact to DNA. Residue Ser-205 is modified to Phosphoserine.

The protein belongs to the MGMT family. The cofactor is Zn(2+).

The protein resides in the nucleus. It carries out the reaction a 6-O-methyl-2'-deoxyguanosine in DNA + L-cysteinyl-[protein] = S-methyl-L-cysteinyl-[protein] + a 2'-deoxyguanosine in DNA. The enzyme catalyses a 4-O-methyl-thymidine in DNA + L-cysteinyl-[protein] = a thymidine in DNA + S-methyl-L-cysteinyl-[protein]. Its function is as follows. Involved in the cellular defense against the biological effects of O6-methylguanine (O6-MeG) and O4-methylthymine (O4-MeT) in DNA. Repairs the methylated nucleobase in DNA by stoichiometrically transferring the methyl group to a cysteine residue in the enzyme. This is a suicide reaction: the enzyme is irreversibly inactivated. The polypeptide is Methylated-DNA--protein-cysteine methyltransferase (MGMT) (Cricetulus griseus (Chinese hamster)).